We begin with the raw amino-acid sequence, 142 residues long: Large ribosomal subunit protein uL13 (142 aa).

The protein belongs to the universal ribosomal protein uL13 family. Part of the 50S ribosomal subunit.

Functionally, this protein is one of the early assembly proteins of the 50S ribosomal subunit, although it is not seen to bind rRNA by itself. It is important during the early stages of 50S assembly. The sequence is that of Large ribosomal subunit protein uL13 from Leptothrix cholodnii (strain ATCC 51168 / LMG 8142 / SP-6) (Leptothrix discophora (strain SP-6)).